The primary structure comprises 63 residues: Large ribosomal subunit protein uL29 (63 aa).

It belongs to the universal ribosomal protein uL29 family.

The sequence is that of Large ribosomal subunit protein uL29 from Mannheimia succiniciproducens (strain KCTC 0769BP / MBEL55E).